Consider the following 1338-residue polypeptide: Nonribosomal peptide synthetase astA (1338 aa).

Residues 22–52 (IAVVSGDIPSPHPKNEPSQTSTLHIPRDSDL) are disordered. The adenylation stretch occupies residues 271 to 681 (FQARCRQNPS…GRKGAEVKLR (411 aa)). In terms of domain architecture, Carrier spans 820–893 (TPVEIIIHDA…SLAEKCSAGG (74 aa)). Residue S854 is modified to O-(pantetheine 4'-phosphoryl)serine. Positions 949–1336 (TFIFRLSGPV…IIRFLDSPDS (388 aa)) are condensation.

Belongs to the NRP synthetase family.

It carries out the reaction 7beta,14,16-trihydroxyconfertifolin + benzoate + H(+) = dideacetyl astellolide A + H2O. The catalysed reaction is 7beta,14,16-trihydroxyconfertifolin + 4-hydroxybenzoate + H(+) = dideacetyl astellolide B + H2O. Its pathway is secondary metabolite biosynthesis; terpenoid biosynthesis. Functionally, nonribosomal peptide synthetase; part of the gene cluster that mediates the biosynthesis of astellolides, drimane-type sesquiterpene esters that show antimicrobial, anti-inflammatory, and anti-tumor activities. The first step in astellolide biosynthesis is performed by the sesquiterpene cyclase astC that catalyzes the formation of drimanyl pyrophosphate from farnesyl pyrophosphate. Drimanyl pyrophosphate is then dephosphorylated by the sesquiterpene phosphatase astI to produce drimanyl monophosphate which is further dephosphorylated to drim-8-ene-11-ol by atsK. Drim-8-ene-11-ol is converted to confertifolin, probably by the cytochrome P450 monooxygenase astD and/or the dehydrogenase astE. The cytochrome P450 monooxygenases astB, astF and astJ then hydroxylate confertifolin at C6, C14, or C15 to form trihydroxy confertifolin. The nonribosomal peptide synthetase astA catalyzes ester bond formation between trihydroxy contifolin and benzoic acid (BA) or 4-hydroxy benzoic acid (4HBA), leading to the formation of dideacetyl astellolides A and B, respectively. Finally, the O-acetyltransferase astG converts dideacetyl astellolides A and B into deacetyl astellolides A and B. The protein is Nonribosomal peptide synthetase astA of Aspergillus oryzae (strain ATCC 42149 / RIB 40) (Yellow koji mold).